A 137-amino-acid chain; its full sequence is Small heat shock protein IbpA (137 aa).

Positions 28–137 (SQSNGGYPPY…AKKPRRIEIN (110 aa)) constitute a sHSP domain.

The protein belongs to the small heat shock protein (HSP20) family. In terms of assembly, monomer. Forms homomultimers of about 100-150 subunits at optimal growth temperatures. Conformation changes to monomers at high temperatures or high ionic concentrations.

It localises to the cytoplasm. Functionally, associates with aggregated proteins, together with IbpB, to stabilize and protect them from irreversible denaturation and extensive proteolysis during heat shock and oxidative stress. Aggregated proteins bound to the IbpAB complex are more efficiently refolded and reactivated by the ATP-dependent chaperone systems ClpB and DnaK/DnaJ/GrpE. Its activity is ATP-independent. The protein is Small heat shock protein IbpA of Shigella sonnei (strain Ss046).